A 360-amino-acid chain; its full sequence is DnaJ homolog subfamily C member 25 (360 aa).

A helical membrane pass occupies residues W20–V40. One can recognise a J domain in the interval D49–L124. The next 2 helical transmembrane spans lie at V150–S170 and L244–C264.

This sequence belongs to the DNAJC25 family.

The protein localises to the membrane. The polypeptide is DnaJ homolog subfamily C member 25 (DNAJC25) (Homo sapiens (Human)).